The following is a 389-amino-acid chain: Maintenance of mitochondrial morphology protein 1-1 (389 aa).

Over 1–22 (MSQFVLPAVASEGIINWPFLTG) the chain is Lumenal. A helical membrane pass occupies residues 23 to 43 (FMLGQFSVGLVLLIFVRFFIF). Over 44–389 (SDQTEPDINT…YRSLQTSPRR (346 aa)) the chain is Cytoplasmic. Residues 83-278 (QPESLDWFSV…YPEYQQFELP (196 aa)) form the SMP-LTD domain. 2 disordered regions span residues 283–345 (KTSA…PKFI) and 360–389 (FYEM…SPRR). Residues 330-341 (MSMSSQRPNINN) show a composition bias toward polar residues.

The protein belongs to the MMM1 family. Homodimer. Component of the ER-mitochondria encounter structure (ERMES) or MDM complex, composed of MMM1, MDM10, MDM12 and MDM34. An MMM1 homodimer associates with one molecule of MDM12 on each side in a pairwise head-to-tail manner, and the SMP-LTD domains of MMM1 and MDM12 generate a continuous hydrophobic tunnel for phospholipid trafficking.

It is found in the endoplasmic reticulum membrane. In terms of biological role, component of the ERMES/MDM complex, which serves as a molecular tether to connect the endoplasmic reticulum (ER) and mitochondria. Components of this complex are involved in the control of mitochondrial shape and protein biogenesis, and function in nonvesicular lipid trafficking between the ER and mitochondria. The MDM12-MMM11 subcomplex functions in the major beta-barrel assembly pathway that is responsible for biogenesis of all outer membrane beta-barrel proteins, and acts in a late step after the SAM complex. The MDM10-MDM12-MMM1 subcomplex further acts in the TOM40-specific pathway after the action of the MDM12-MMM1 complex. Essential for establishing and maintaining the structure of mitochondria and maintenance of mtDNA nucleoids. The chain is Maintenance of mitochondrial morphology protein 1-1 from Yarrowia lipolytica (strain CLIB 122 / E 150) (Yeast).